The primary structure comprises 364 residues: Developmentally-regulated GTP-binding protein 2 (364 aa).

The residue at position 21 (K21) is a (3S)-3-hydroxylysine. The 226-residue stretch at 63–288 (ARVALIGFPS…LLEMLWEYLA (226 aa)) folds into the OBG-type G domain. Residues 69-76 (GFPSVGKS), 94-98 (FTTLT), 115-118 (DLPG), 246-249 (NKID), and 269-271 (SCG) contribute to the GTP site. Mg(2+) contacts are provided by S76 and T96. In terms of domain architecture, TGS spans 288 to 363 (ALTCIYTKKR…EHEDVIQIVK (76 aa)).

It belongs to the TRAFAC class OBG-HflX-like GTPase superfamily. OBG GTPase family. Interacts with RWDD1; this interaction confers protection to polyubiquitination and proteolytic degradation. Interacts with JMJD7; this interaction is direct. The cofactor is Mg(2+). In terms of processing, polyubiquitinated. Post-translationally, hydroxylated (with S stereochemistry) at C-3 of Lys-21 by JMJD7. Fairly high levels in liver, heart, kidney, and brain. Very low levels in lung, spleen, testis and skeletal muscle.

It is found in the nucleus. It localises to the cytoplasm. It carries out the reaction GTP + H2O = GDP + phosphate + H(+). Catalyzes the conversion of GTP to GDP through hydrolysis of the gamma-phosphate bond in GTP. When hydroxylated at C-3 of 'Lys-21' by JMJD7, may bind to RNA and play a role in translation. This chain is Developmentally-regulated GTP-binding protein 2 (Drg2), found in Mus musculus (Mouse).